The following is a 206-amino-acid chain: Outer-membrane lipoprotein carrier protein (206 aa).

The first 21 residues, 1–21, serve as a signal peptide directing secretion; sequence MKKLLCAVLLSPLLYSNAVLA.

The protein belongs to the LolA family. Monomer.

The protein localises to the periplasm. Participates in the translocation of lipoproteins from the inner membrane to the outer membrane. Only forms a complex with a lipoprotein if the residue after the N-terminal Cys is not an aspartate (The Asp acts as a targeting signal to indicate that the lipoprotein should stay in the inner membrane). The chain is Outer-membrane lipoprotein carrier protein from Shewanella sp. (strain MR-7).